An 80-amino-acid polypeptide reads, in one-letter code: CLAVATA3/ESR (CLE)-related protein 4 (80 aa).

The signal sequence occupies residues 1-22 (MASFKLWVCLILLLLEFSVHQC). A disordered region spans residues 55 to 80 (SKDGQTVLGTLDSKRLSPGGPDPRHH). A hydroxyproline mark is found at Pro72 and Pro75. Residue Pro75 is glycosylated (O-linked (Ara...) hydroxyproline).

Belongs to the CLV3/ESR signal peptide family. The O-glycosylation (arabinosylation) of the hydroxyproline Pro-75 enhances binding affinity of the CLE4p peptide for its receptor. Expressed in roots and seedlings.

It localises to the secreted. The protein resides in the extracellular space. Its function is as follows. Extracellular signal peptide that regulates cell fate. This chain is CLAVATA3/ESR (CLE)-related protein 4, found in Arabidopsis thaliana (Mouse-ear cress).